The following is a 481-amino-acid chain: ATP synthase subunit beta, chloroplastic (481 aa).

Position 162 to 169 (162 to 169) interacts with ATP; sequence GGAGVGKT.

Belongs to the ATPase alpha/beta chains family. In terms of assembly, F-type ATPases have 2 components, CF(1) - the catalytic core - and CF(0) - the membrane proton channel. CF(1) has five subunits: alpha(3), beta(3), gamma(1), delta(1), epsilon(1). CF(0) has four main subunits: a(1), b(1), b'(1) and c(9-12).

The protein resides in the plastid. It is found in the chloroplast thylakoid membrane. The catalysed reaction is ATP + H2O + 4 H(+)(in) = ADP + phosphate + 5 H(+)(out). Its function is as follows. Produces ATP from ADP in the presence of a proton gradient across the membrane. The catalytic sites are hosted primarily by the beta subunits. This is ATP synthase subunit beta, chloroplastic from Chlorella vulgaris (Green alga).